The chain runs to 604 residues: Pescadillo homolog (604 aa).

The BRCT domain maps to 349–448 (PTSTLFSKFI…ELLPVNKYAP (100 aa)). 2 disordered regions span residues 452–562 (LPPH…MTNK) and 579–604 (TRTQ…LSKK). Coiled-coil stretches lie at residues 468–522 (EAEK…LEAA) and 573–604 (GIDK…LSKK). Residues 476-510 (ENAEEEEEDEVDEDDEDADEDEEDEEEEDEEEDED) are compositionally biased toward acidic residues. Over residues 593-604 (KTKAQLDKLSKK) the composition is skewed to basic and acidic residues.

The protein belongs to the pescadillo family. As to quaternary structure, component of the NOP7 complex, composed of ERB1, NOP7 and YTM1. The complex is held together by ERB1, which interacts with NOP7 via its N-terminal domain and with YTM1 via a high-affinity interaction between the seven-bladed beta-propeller domains of the 2 proteins. The NOP7 complex associates with the 66S pre-ribosome.

The protein resides in the nucleus. Its subcellular location is the nucleolus. It is found in the nucleoplasm. Component of the NOP7 complex, which is required for maturation of the 25S and 5.8S ribosomal RNAs and formation of the 60S ribosome. The polypeptide is Pescadillo homolog (Scheffersomyces stipitis (strain ATCC 58785 / CBS 6054 / NBRC 10063 / NRRL Y-11545) (Yeast)).